We begin with the raw amino-acid sequence, 230 residues long: Flagellar L-ring protein (230 aa).

The first 15 residues, 1 to 15 (MSRPPLLSSACLAAT), serve as a signal peptide directing secretion. Cysteine 16 is lipidated: N-palmitoyl cysteine. Residue cysteine 16 is the site of S-diacylglycerol cysteine attachment.

Belongs to the FlgH family. In terms of assembly, the basal body constitutes a major portion of the flagellar organelle and consists of four rings (L,P,S, and M) mounted on a central rod.

The protein localises to the cell outer membrane. The protein resides in the bacterial flagellum basal body. Functionally, assembles around the rod to form the L-ring and probably protects the motor/basal body from shearing forces during rotation. The sequence is that of Flagellar L-ring protein from Xanthomonas oryzae pv. oryzae (strain MAFF 311018).